The primary structure comprises 276 residues: Bis(5'-nucleosyl)-tetraphosphatase, symmetrical (276 aa).

The protein belongs to the Ap4A hydrolase family.

It catalyses the reaction P(1),P(4)-bis(5'-adenosyl) tetraphosphate + H2O = 2 ADP + 2 H(+). Functionally, hydrolyzes diadenosine 5',5'''-P1,P4-tetraphosphate to yield ADP. The protein is Bis(5'-nucleosyl)-tetraphosphatase, symmetrical of Dechloromonas aromatica (strain RCB).